The chain runs to 40 residues: Photosystem II reaction center protein J (40 aa).

The helical transmembrane segment at 8–28 (IPLWIIGTVAGILVIGLVGVF) threads the bilayer.

Belongs to the PsbJ family. PSII is composed of 1 copy each of membrane proteins PsbA, PsbB, PsbC, PsbD, PsbE, PsbF, PsbH, PsbI, PsbJ, PsbK, PsbL, PsbM, PsbT, PsbX, PsbY, PsbZ, Psb30/Ycf12, at least 3 peripheral proteins of the oxygen-evolving complex and a large number of cofactors. It forms dimeric complexes.

It localises to the plastid. The protein resides in the chloroplast thylakoid membrane. One of the components of the core complex of photosystem II (PSII). PSII is a light-driven water:plastoquinone oxidoreductase that uses light energy to abstract electrons from H(2)O, generating O(2) and a proton gradient subsequently used for ATP formation. It consists of a core antenna complex that captures photons, and an electron transfer chain that converts photonic excitation into a charge separation. In Helianthus annuus (Common sunflower), this protein is Photosystem II reaction center protein J.